Reading from the N-terminus, the 75-residue chain is ATP synthase subunit c (75 aa).

2 consecutive transmembrane segments (helical) span residues 8 to 28 and 52 to 72; these read FIAI…IANI and IGAA…MLLI.

This sequence belongs to the ATPase C chain family. F-type ATPases have 2 components, F(1) - the catalytic core - and F(0) - the membrane proton channel. F(1) has five subunits: alpha(3), beta(3), gamma(1), delta(1), epsilon(1). F(0) has three main subunits: a(1), b(2) and c(10-14). The alpha and beta chains form an alternating ring which encloses part of the gamma chain. F(1) is attached to F(0) by a central stalk formed by the gamma and epsilon chains, while a peripheral stalk is formed by the delta and b chains.

The protein resides in the cell membrane. Its function is as follows. F(1)F(0) ATP synthase produces ATP from ADP in the presence of a proton or sodium gradient. F-type ATPases consist of two structural domains, F(1) containing the extramembraneous catalytic core and F(0) containing the membrane proton channel, linked together by a central stalk and a peripheral stalk. During catalysis, ATP synthesis in the catalytic domain of F(1) is coupled via a rotary mechanism of the central stalk subunits to proton translocation. Key component of the F(0) channel; it plays a direct role in translocation across the membrane. A homomeric c-ring of between 10-14 subunits forms the central stalk rotor element with the F(1) delta and epsilon subunits. This is ATP synthase subunit c from Wolbachia pipientis wMel.